Consider the following 211-residue polypeptide: NADH-quinone oxidoreductase subunit A (211 aa).

3 helical membrane passes run 7–27, 61–81, and 88–108; these read WSALAFILAAIGLVIFMLVVP, FYLVAIFFVIFDLEALYLYAY, and VGWIGYATALIFVVDLLIGLI.

The protein belongs to the complex I subunit 3 family. NDH-1 is composed of 14 different subunits. Subunits NuoA, H, J, K, L, M, N constitute the membrane sector of the complex.

The protein localises to the cell inner membrane. The enzyme catalyses a quinone + NADH + 5 H(+)(in) = a quinol + NAD(+) + 4 H(+)(out). In terms of biological role, NDH-1 shuttles electrons from NADH, via FMN and iron-sulfur (Fe-S) centers, to quinones in the respiratory chain. The immediate electron acceptor for the enzyme in this species is believed to be ubiquinone. Couples the redox reaction to proton translocation (for every two electrons transferred, four hydrogen ions are translocated across the cytoplasmic membrane), and thus conserves the redox energy in a proton gradient. The protein is NADH-quinone oxidoreductase subunit A of Psychrobacter sp. (strain PRwf-1).